The following is a 195-amino-acid chain: Ribosome maturation factor RimM (195 aa).

One can recognise a PRC barrel domain in the interval 101 to 191 (ADEWYPKDLI…YLTLDPPGGL (91 aa)).

The protein belongs to the RimM family. As to quaternary structure, binds ribosomal protein uS19.

It is found in the cytoplasm. Its function is as follows. An accessory protein needed during the final step in the assembly of 30S ribosomal subunit, possibly for assembly of the head region. Essential for efficient processing of 16S rRNA. May be needed both before and after RbfA during the maturation of 16S rRNA. It has affinity for free ribosomal 30S subunits but not for 70S ribosomes. The protein is Ribosome maturation factor RimM of Bifidobacterium adolescentis (strain ATCC 15703 / DSM 20083 / NCTC 11814 / E194a).